Consider the following 206-residue polypeptide: Ras-related protein Ral-B (206 aa).

GTP is bound at residue 21–29 (GSGGVGKSA). Positions 43-51 (YEPTKADSY) match the Effector region motif. GTP-binding positions include 68–72 (DTAGQ), 128–131 (NKSD), and 158–160 (SAK). Residues 180–189 (KMSENKDKNG) are compositionally biased toward basic and acidic residues. Residues 180 to 206 (KMSENKDKNGKKSSKNKKSFKERCCLL) are disordered. At Cys-203 the chain carries Cysteine methyl ester. Cys-203 carries the S-geranylgeranyl cysteine lipid modification. The propeptide at 204-206 (CLL) is removed in mature form.

This sequence belongs to the small GTPase superfamily. Ras family. Interacts with EXOC2/Sec5 and EXOC8/Exo84. Interacts (via effector domain) with RALBP1. Post-translationally, prenylation is essential for membrane localization. In terms of processing, the farnesylated form confers resistance to the proapoptotic and anti-anchorage-dependent growth effects of some geranylgeranyltransferase I inhibitors.

The protein resides in the cell membrane. It localises to the midbody. The enzyme catalyses GTP + H2O = GDP + phosphate + H(+). With respect to regulation, alternates between an inactive form bound to GDP and an active form bound to GTP. Activated by a guanine nucleotide-exchange factor (GEF) and inactivated by a GTPase-activating protein (GAP). Its function is as follows. Multifunctional GTPase involved in a variety of cellular processes including gene expression, cell migration, cell proliferation, oncogenic transformation and membrane trafficking. Accomplishes its multiple functions by interacting with distinct downstream effectors. Acts as a GTP sensor for GTP-dependent exocytosis of dense core vesicles. Required both to stabilize the assembly of the exocyst complex and to localize functional exocyst complexes to the leading edge of migrating cells. Required for suppression of apoptosis. In late stages of cytokinesis, upon completion of the bridge formation between dividing cells, mediates exocyst recruitment to the midbody to drive abscission. Involved in ligand-dependent receptor mediated endocytosis of the EGF and insulin receptors. In Pongo abelii (Sumatran orangutan), this protein is Ras-related protein Ral-B (RALB).